Here is a 170-residue protein sequence, read N- to C-terminus: E1B protein, small T-antigen (170 aa).

It belongs to the adenoviridae E1B 19 kDa protein family.

The protein is E1B protein, small T-antigen of Canine adenovirus serotype 2 (CAdV-2).